A 354-amino-acid polypeptide reads, in one-letter code: MLIFPLINDTSRKIIHIDMDAFFASVEERDNPKLKGHPVIIGSDPRLTGGRGVVSTCNYEARKFGVHSAMSSKEAYERCPQGIFISGNYEKYQAVGLQIREIFKRYTDLIEPMSIDEAYLDVTENKLGIKSAVKIAKLIQHDIWNELQLTASAGVSYNKFLAKIASDYEKPHGLTVILPEEAEVSLAPMDIAKFHGVGKKSVEKLHEMGVYTGADLLKIPEMTLIDKFGRFGFDLYRKARGISNSPVKSNRIRKSIGKERTYAKLLYSEEDIKKELTLLAQKVENSLTKHDKKGRTIVLKIRYADFSTLTKRKSLNLATQDKEQIERTAHEIYDSLEEQPRGIRLLGLTVTGFE.

Residues 14–198 (IIHIDMDAFF…MDIAKFHGVG (185 aa)) form the UmuC domain. Mg(2+) contacts are provided by D18 and D116. E117 is an active-site residue.

Belongs to the DNA polymerase type-Y family. Monomer. Mg(2+) serves as cofactor.

It is found in the cytoplasm. It carries out the reaction DNA(n) + a 2'-deoxyribonucleoside 5'-triphosphate = DNA(n+1) + diphosphate. Poorly processive, error-prone DNA polymerase involved in untargeted mutagenesis. Copies undamaged DNA at stalled replication forks, which arise in vivo from mismatched or misaligned primer ends. These misaligned primers can be extended by PolIV. Exhibits no 3'-5' exonuclease (proofreading) activity. May be involved in translesional synthesis, in conjunction with the beta clamp from PolIII. The polypeptide is DNA polymerase IV (Streptococcus sanguinis (strain SK36)).